A 424-amino-acid polypeptide reads, in one-letter code: Serine/threonine-protein kinase H1 (424 aa).

The N-myristoyl glycine moiety is linked to residue Gly2. Cys3 carries the S-palmitoyl cysteine lipid modification. The segment at 59-79 is disordered; that stretch reads APPCPGVPNTGHTAPPSEPPR. Positions 98-355 constitute a Protein kinase domain; the sequence is YDIKALIGRG…ALQALRHPWV (258 aa). Residues 104-112 and Lys127 each bind ATP; that span reads IGRGSFSRV. The active-site Proton acceptor is the Asp218. Residues 378–408 form a disordered region; sequence RASSRCQSTKSSQSTRSSRSTRSNKSRRVRE. Phosphoserine; by autocatalysis is present on residues Ser380 and Ser381. Positions 381-398 are enriched in low complexity; sequence SRCQSTKSSQSTRSSRST.

It belongs to the protein kinase superfamily. CAMK Ser/Thr protein kinase family. In terms of assembly, homodimer. Post-translationally, autophosphorylated on serine residues. In terms of processing, myristoylated. Required for membrane association. Prerequisite for palmitoylation to occur. Palmitoylated.

The protein resides in the golgi apparatus. It localises to the cytoplasm. The protein localises to the cytoskeleton. It is found in the microtubule organizing center. Its subcellular location is the centrosome. The protein resides in the nucleus speckle. It localises to the endoplasmic reticulum membrane. The protein localises to the cell membrane. The catalysed reaction is L-seryl-[protein] + ATP = O-phospho-L-seryl-[protein] + ADP + H(+). It catalyses the reaction L-threonyl-[protein] + ATP = O-phospho-L-threonyl-[protein] + ADP + H(+). With respect to regulation, activity depends on Ca(2+) concentration. Its function is as follows. Serine/threonine protein kinase that may be involved in the regulation of pre-mRNA processing. It may phosphorylate components of nuclear splice factor compartments (SFC), such as non-snRNP splicing factors containing a serine/arginine-rich domain (SR proteins). Reversible phosphorylation of SR proteins may cause their release into the nucleoplasm and change their local concentration, thereby influencing alternative splicing. The protein is Serine/threonine-protein kinase H1 (Pskh1) of Mus musculus (Mouse).